The chain runs to 156 residues: Small ribosomal subunit protein uS7 (156 aa).

Belongs to the universal ribosomal protein uS7 family. As to quaternary structure, part of the 30S ribosomal subunit. Contacts proteins S9 and S11.

Functionally, one of the primary rRNA binding proteins, it binds directly to 16S rRNA where it nucleates assembly of the head domain of the 30S subunit. Is located at the subunit interface close to the decoding center, probably blocks exit of the E-site tRNA. This chain is Small ribosomal subunit protein uS7, found in Finegoldia magna (strain ATCC 29328 / DSM 20472 / WAL 2508) (Peptostreptococcus magnus).